The primary structure comprises 1444 residues: Protein shortage in chiasmata 1 ortholog (1444 aa).

The segment covering 1106 to 1117 (SITKSPQISSPQ) has biased composition (low complexity). The disordered stretch occupies residues 1106 to 1129 (SITKSPQISSPQENRNQISTLSSQ).

The protein belongs to the XPF family. Highly divergent. As to quaternary structure, interacts with TEX11. Interacts with SPO16.

The protein resides in the chromosome. Its function is as follows. ATPase required during meiosis for the formation of crossover recombination intermediates. Binds DNA: preferentially binds to single-stranded DNA and DNA branched structures. Does not show nuclease activity in vitro, but shows ATPase activity, which is stimulated by the presence of single-stranded DNA. Plays a key role in homologous recombination and crossing-over in meiotic prophase I in male and female germ cells. Required for proper synaptonemal complex assembly and homologous chromosome pairing. Requiref for recruitment TEX11 and MSH4 to recombination intermediates. This chain is Protein shortage in chiasmata 1 ortholog, found in Homo sapiens (Human).